We begin with the raw amino-acid sequence, 217 residues long: Somatotropin (217 aa).

Residues 1–26 (MAPGSWFSPLFIAVITLGLQWPKEAA) form the signal peptide. Residue histidine 46 coordinates Zn(2+). A disulfide bridge links cysteine 79 with cysteine 190. Glutamate 199 is a Zn(2+) binding site. Cysteine 207 and cysteine 215 are joined by a disulfide.

This sequence belongs to the somatotropin/prolactin family.

Its subcellular location is the secreted. Its function is as follows. Growth hormone plays an important role in growth control. This is Somatotropin (GH) from Struthio camelus (Common ostrich).